A 4450-amino-acid polypeptide reads, in one-letter code: Gramicidin S synthase 2 (4450 aa).

Positions 467-1044 (DKTIHQLFTE…IQEISNYING (578 aa)) are domain 1 (proline-activating). Carrier domains are found at residues 971-1046 (VPTN…NGAK), 2006-2081 (APSS…ADGE), 3051-3126 (APRT…EETD), and 4089-4164 (APRN…THQE). 4 positions are modified to O-(pantetheine 4'-phosphoryl)serine: serine 1006, serine 2041, serine 3086, and serine 4124. Residues 1521 to 2080 (DHVAVGWKDQ…SALAQYIADG (560 aa)) are domain 2 (valine-activating). The segment at 2538–3134 (YATNKIFHEL…TDTEQYMAIQ (597 aa)) is domain 3 (ornithine-activating). A domain 4 (leucine-activating) region spans residues 3590–4172 (IQELFEEQVK…QESENNVHQP (583 aa)).

Belongs to the ATP-dependent AMP-binding enzyme family. In terms of assembly, large multienzyme complex of GrsA and GrsB. Requires pantetheine 4'-phosphate as cofactor.

It participates in antibiotic biosynthesis; gramicidin S biosynthesis. Functionally, this protein is a multifunctional enzyme, able to activate and polymerize the amino acids Pro, Val, Orn and Leu. Activation sites for these AA consist of individual domains. The protein is Gramicidin S synthase 2 (grsB) of Brevibacillus brevis (Bacillus brevis).